The primary structure comprises 591 residues: MTIAITDVVLRDAHQSLFATRLRLDDMLPIAAALDDVGYGSLECWGGATFDACIRFLGEDPWLRLRELKKAMPKTPLQMLLRGQNLLGYRHYADDVVERFVERAVKNGMDVFRVFDAMNDPRNMKAALQAVRSHGAHAQGTLSYTTSPAHTLQTWLDLTEQLLETGVDSIAIKDMSGILTPMAAYELVSEIKKRFEVRLHLHCHATTGMAEMALLKAIEAGVDGVDTAISSMSATYGHPATEALVATLAGTEHDTGLDILKLENIAAYFREVRKKYHAFEGQLKGYDSRILVAQVPGGMLTNLESQLKQQNAADKLDQVLAEIPRVREDLGFIPLVTPTSQIVGTQAVLNVLTGERYKTIAKETAGILKGEYGHTPVPVNAALQARVLEGGAPVTCRPADLLKPELAELEADVRRQAQEKGITLAGNAIDDVLTVALFPQIGLKFLENRNNPAAFEPLPQAEAAQPVAKAEKPAASGIYTVEVEGKAFVVKVSDGGDISQLTAAVPAASSAPVQAAAPAGAGTPVTAPLAGNIWKVIATEGQTVAEGDVLLILEAMKMETEIRAAQAGTVRGIAVKSGDAVSVGDTLMTLA.

The region spanning 3 to 263 is the Pyruvate carboxyltransferase domain; that stretch reads IAITDVVLRD…DTGLDILKLE (261 aa). The 74-residue stretch at 518–591 folds into the Biotinyl-binding domain; the sequence is PAGAGTPVTA…SVGDTLMTLA (74 aa). Residue lysine 557 is modified to N6-biotinyllysine.

Composed of three chains (alpha, beta, and gamma). Biotin serves as cofactor.

The enzyme catalyses oxaloacetate + 2 Na(+)(in) + H(+) = pyruvate + 2 Na(+)(out) + CO2. In terms of biological role, catalyzes the decarboxylation of oxaloacetate coupled to Na(+) translocation. This Salmonella typhimurium (strain LT2 / SGSC1412 / ATCC 700720) protein is Oxaloacetate decarboxylase alpha chain (oadA1).